A 309-amino-acid polypeptide reads, in one-letter code: Homoserine O-succinyltransferase (309 aa).

C142 acts as the Acyl-thioester intermediate in catalysis. K163 and S192 together coordinate substrate. H235 functions as the Proton acceptor in the catalytic mechanism. The active site involves E237. R249 provides a ligand contact to substrate.

This sequence belongs to the MetA family.

The protein localises to the cytoplasm. The catalysed reaction is L-homoserine + succinyl-CoA = O-succinyl-L-homoserine + CoA. The protein operates within amino-acid biosynthesis; L-methionine biosynthesis via de novo pathway; O-succinyl-L-homoserine from L-homoserine: step 1/1. Transfers a succinyl group from succinyl-CoA to L-homoserine, forming succinyl-L-homoserine. The chain is Homoserine O-succinyltransferase from Cronobacter sakazakii (strain ATCC BAA-894) (Enterobacter sakazakii).